The chain runs to 214 residues: Phosphatidylserine decarboxylase proenzyme (214 aa).

Ser182 acts as the Schiff-base intermediate with substrate; via pyruvic acid in catalysis. Ser182 bears the Pyruvic acid (Ser); by autocatalysis mark.

This sequence belongs to the phosphatidylserine decarboxylase family. PSD-A subfamily. As to quaternary structure, heterodimer of a large membrane-associated beta subunit and a small pyruvoyl-containing alpha subunit. Pyruvate serves as cofactor. Is synthesized initially as an inactive proenzyme. Formation of the active enzyme involves a self-maturation process in which the active site pyruvoyl group is generated from an internal serine residue via an autocatalytic post-translational modification. Two non-identical subunits are generated from the proenzyme in this reaction, and the pyruvate is formed at the N-terminus of the alpha chain, which is derived from the carboxyl end of the proenzyme. The post-translation cleavage follows an unusual pathway, termed non-hydrolytic serinolysis, in which the side chain hydroxyl group of the serine supplies its oxygen atom to form the C-terminus of the beta chain, while the remainder of the serine residue undergoes an oxidative deamination to produce ammonia and the pyruvoyl prosthetic group on the alpha chain.

The protein resides in the cell membrane. The enzyme catalyses a 1,2-diacyl-sn-glycero-3-phospho-L-serine + H(+) = a 1,2-diacyl-sn-glycero-3-phosphoethanolamine + CO2. It participates in phospholipid metabolism; phosphatidylethanolamine biosynthesis; phosphatidylethanolamine from CDP-diacylglycerol: step 2/2. Its function is as follows. Catalyzes the formation of phosphatidylethanolamine (PtdEtn) from phosphatidylserine (PtdSer). The chain is Phosphatidylserine decarboxylase proenzyme from Burkholderia lata (strain ATCC 17760 / DSM 23089 / LMG 22485 / NCIMB 9086 / R18194 / 383).